A 154-amino-acid chain; its full sequence is Ribonuclease H (154 aa).

Residues 5–146 form the RNase H type-1 domain; that stretch reads EQNIVYLYCD…ADELANRGID (142 aa). 4 residues coordinate Mg(2+): aspartate 14, glutamate 52, aspartate 74, and aspartate 138.

It belongs to the RNase H family. As to quaternary structure, monomer. It depends on Mg(2+) as a cofactor.

It is found in the cytoplasm. It carries out the reaction Endonucleolytic cleavage to 5'-phosphomonoester.. Its function is as follows. Endonuclease that specifically degrades the RNA of RNA-DNA hybrids. The protein is Ribonuclease H of Coxiella burnetii (strain CbuG_Q212) (Coxiella burnetii (strain Q212)).